The following is a 181-amino-acid chain: ATP synthase subunit b 2 (181 aa).

Residues 1–12 (MAEGHGTTAHTG) show a composition bias toward low complexity. The tract at residues 1–20 (MAEGHGTTAHTGAEGGHKAP) is disordered. The chain crosses the membrane as a helical span at residues 33–53 (LVSLLIAFVALYLIVSKVALP).

This sequence belongs to the ATPase B chain family. In terms of assembly, F-type ATPases have 2 components, F(1) - the catalytic core - and F(0) - the membrane proton channel. F(1) has five subunits: alpha(3), beta(3), gamma(1), delta(1), epsilon(1). F(0) has three main subunits: a(1), b(2) and c(10-14). The alpha and beta chains form an alternating ring which encloses part of the gamma chain. F(1) is attached to F(0) by a central stalk formed by the gamma and epsilon chains, while a peripheral stalk is formed by the delta and b chains.

It localises to the cell inner membrane. Its function is as follows. F(1)F(0) ATP synthase produces ATP from ADP in the presence of a proton or sodium gradient. F-type ATPases consist of two structural domains, F(1) containing the extramembraneous catalytic core and F(0) containing the membrane proton channel, linked together by a central stalk and a peripheral stalk. During catalysis, ATP synthesis in the catalytic domain of F(1) is coupled via a rotary mechanism of the central stalk subunits to proton translocation. Functionally, component of the F(0) channel, it forms part of the peripheral stalk, linking F(1) to F(0). The b'-subunit is a diverged and duplicated form of b found in plants and photosynthetic bacteria. In Rhodopseudomonas palustris (strain BisA53), this protein is ATP synthase subunit b 2 (atpF2).